The following is a 301-amino-acid chain: 4-hydroxy-tetrahydrodipicolinate synthase (301 aa).

T57 is a binding site for pyruvate. Y143 (proton donor/acceptor) is an active-site residue. K171 serves as the catalytic Schiff-base intermediate with substrate. I211 contacts pyruvate.

Belongs to the DapA family. As to quaternary structure, homotetramer; dimer of dimers.

The protein localises to the cytoplasm. The catalysed reaction is L-aspartate 4-semialdehyde + pyruvate = (2S,4S)-4-hydroxy-2,3,4,5-tetrahydrodipicolinate + H2O + H(+). It functions in the pathway amino-acid biosynthesis; L-lysine biosynthesis via DAP pathway; (S)-tetrahydrodipicolinate from L-aspartate: step 3/4. Functionally, catalyzes the condensation of (S)-aspartate-beta-semialdehyde [(S)-ASA] and pyruvate to 4-hydroxy-tetrahydrodipicolinate (HTPA). The polypeptide is 4-hydroxy-tetrahydrodipicolinate synthase (Bifidobacterium longum (strain DJO10A)).